The following is a 64-amino-acid chain: MIQGFYKDQKLHLLEDPMQQYTVMKVEENAVCVYRWIDDYRHKIERFTDVEEAKKLLGEGWPKQ.

The polypeptide is SPbeta prophage-derived uncharacterized protein YosJ (yosJ) (Bacillus subtilis (strain 168)).